The chain runs to 513 residues: Calcium-dependent protein kinase 2 (513 aa).

The N-myristoyl glycine moiety is linked to residue Gly2. One can recognise a Protein kinase domain in the interval 72–326; the sequence is YIIDEKLGQG…IEEALNHPWI (255 aa). ATP is bound by residues 78 to 86 and Lys101; that span reads LGQGTYGCV. Asp192 serves as the catalytic Proton acceptor. The short motif at 345–353 is the J domain autoinhibitory motif element; it reads NLKNFKKEN. Residues 345–380 form a j domain region; that stretch reads NLKNFKKENELKKIALTIIAKHLCDVEINNLRNIFI. The J domain EF-hand interaction motif signature appears at 354–363; the sequence is ELKKIALTII. EF-hand domains follow at residues 370 to 405, 406 to 441, 442 to 477, and 480 to 513; these read VEINNLRNIFIALDVDNSGTLSSQEILDGLKKIGYQ, KIPPDIHQVLRDIDSNASGQIHYTDFLAATIDKQTY, LKKEVCLIPFKFFDIDGNGKISVEELKRIFGRDDIE, and LIDKAIDSLLQEVDLNGDGEIDFHEFMLMMSKKK. Asp383, Asp385, Ser387, Thr389, and Glu394 together coordinate Ca(2+). 10 residues coordinate Ca(2+): Asp455, Asp457, Asn459, Lys461, Glu466, Asp493, Asn495, Asp497, Glu499, and Glu504.

This sequence belongs to the protein kinase superfamily. Ser/Thr protein kinase family. CDPK subfamily. In terms of assembly, monomer. It depends on Mg(2+) as a cofactor. Myristoylated; myristoylation may target it to different subcellular compartments. Post-translationally, autophosphorylated in vitro.

It carries out the reaction L-seryl-[protein] + ATP = O-phospho-L-seryl-[protein] + ADP + H(+). The catalysed reaction is L-threonyl-[protein] + ATP = O-phospho-L-threonyl-[protein] + ADP + H(+). Its activity is regulated as follows. Activated by calcium. Upon calcium binding to the EF-hand domains, the C-terminus of the junction domain (J domain) undergoes a conformational change which results in the dissociation of the pseudo-substrate inhibitory motif from the catalytic domain. This, in turn, may facilitate the autophosphorylation of the activation loop at Thr-232, which leads to the kinase activation. Its function is as follows. Calcium-dependent protein kinase which acts as a sensor and effector of intracellular Ca(2+) levels probably in part downstream of cGMP-activated PKG kinase. During male gametogenesis in the mosquito gut, required for male exflagellation, possibly by regulating male gamete exit from the host erythrocytes. Not required for asexual blood stage proliferation. This Plasmodium falciparum (isolate K1 / Thailand) protein is Calcium-dependent protein kinase 2.